We begin with the raw amino-acid sequence, 244 residues long: HTH-type transcriptional regulator RdgA (244 aa).

Positions L9–L62 constitute an HTH cro/C1-type domain. The H-T-H motif DNA-binding region spans Q20–V39.

Functionally, regulates pectin lyase production in response to DNA damage. The polypeptide is HTH-type transcriptional regulator RdgA (rdgA) (Pectobacterium carotovorum subsp. carotovorum (Erwinia carotovora subsp. carotovora)).